The sequence spans 1146 residues: Integrin alpha-PS1 (1146 aa).

The signal sequence occupies residues 1–30 (MLELPFTTIRPNCRLRQNLGILIILQCVLT). The Extracellular segment spans residues 31 to 1085 (CYNFNLEQRL…NQQRDTSIPW (1055 aa)). FG-GAP repeat units lie at residues 38–105 (QRLP…FDDC), 121–186 (LSPP…FEEV), 193–245 (RPVQ…YLQR), 254–303 (HSDL…KSTD), 304–366 (NPIP…TLPM), 367–422 (KYTL…GLNS), and 432–494 (ELGG…RKEL). Asparagine 68, asparagine 86, and asparagine 147 each carry an N-linked (GlcNAc...) asparagine glycan. Residues asparagine 470, asparagine 511, asparagine 657, asparagine 680, asparagine 711, asparagine 718, asparagine 761, and asparagine 928 are each glycosylated (N-linked (GlcNAc...) asparagine). The tract at residues 938–958 (YYSSSHRDDHSDDTQSNRNRV) is disordered. Over residues 942–952 (SHRDDHSDDTQ) the composition is skewed to basic and acidic residues. An N-linked (GlcNAc...) asparagine glycan is attached at asparagine 1027. Residues 1086-1106 (LIIILGIVGGLLLLALVTYVL) traverse the membrane as a helical segment. Over 1107–1146 (WKVGFFKRIRPTDPTLSGNLEKMNEEKPFLAPSKNTHHVF) the chain is Cytoplasmic.

It belongs to the integrin alpha chain family. Heterodimer of an alpha and a beta subunit. The alpha subunit is composed of a heavy and a light chain linked by a disulfide bond. Alpha-PS1 associates with beta-PS. In terms of tissue distribution, expressed in follicle cells (at protein level). At syncytial blastoderm stage, expressed in the ectoderm but not in the mesodermal precursors. At embryonic stage 7, expressed in dorsal and ventrolateral ectoderm and in some yolk nuclei. At late stage 10, expression is homogeneous in the ectoderm and is particularly abundant in the anterior and posterior midgut primordia. At stage 11, strongly expressed in a metameric pattern in the ectoderm, in the proctodeum and in the posterior midgut primordium. At stage 12, accumulates at the segment boundaries that start to become morphologically visible, similar expression pattern is observed in the central nervous system. In third larval instar wing imaginal disk, strongly expressed in the dorsal compartment, in the adepithelial cells and in patches on the peripodial membrane covering the imaginal disk to the outside.

It is found in the apical cell membrane. Its subcellular location is the lateral cell membrane. It localises to the basal cell membrane. Functionally, integrin alpha-PS1/beta-PS is a receptor for laminin. This is Integrin alpha-PS1 (mew) from Drosophila melanogaster (Fruit fly).